Reading from the N-terminus, the 194-residue chain is Putative manganese efflux pump MntP (194 aa).

Helical transmembrane passes span 3 to 23, 37 to 57, 65 to 85, 112 to 132, 137 to 157, and 170 to 190; these read PITT…AAIG, LYVA…GWLL, IATF…IHMI, LAAT…SMAF, IGIV…FGVM, and AEIV…YEHL.

This sequence belongs to the MntP (TC 9.B.29) family.

The protein resides in the cell inner membrane. Functionally, probably functions as a manganese efflux pump. The protein is Putative manganese efflux pump MntP of Xylella fastidiosa (strain M23).